We begin with the raw amino-acid sequence, 152 residues long: MADSERLTAPGCWAACTSFSRTRKGFLLFAEIILCLVILICFSTSTSGYSFLSVIEMIFAAIFFVVYMCDLHTKIQIINWPWSDFFRTLVAAILYLITSIVVLVERGNGSKIAAGALGLCAAGLFGYDAYITFPLRQQRHTAAPTDPADGPV.

One can recognise an MARVEL domain in the interval 19–137 (FSRTRKGFLL…DAYITFPLRQ (119 aa)). A run of 3 helical transmembrane segments spans residues 25–45 (GFLL…FSTS), 48–68 (GYSF…VVYM), and 85–105 (FFRT…VLVE). N-linked (GlcNAc...) asparagine glycosylation occurs at Asn108. A helical membrane pass occupies residues 112–132 (IAAGALGLCAAGLFGYDAYIT).

The protein localises to the membrane. Functionally, may play a role in cell differentiation in the intestinal epithelium. The sequence is that of Proteolipid protein 2 (PLP2) from Bos taurus (Bovine).